Reading from the N-terminus, the 144-residue chain is MRLNTLSPAPGRVSAKKRVGRGIGSGLGKTAGRGHKGLKSRSGGSVKPGFEGGQMPLQKRLPKFGFTSRISRVTAEVRLAELNKVEADIIDIEALRAADLIDNNIKRAKVFLSGELTKAVTIKGLMVTKGAKAAIEAAGGKIEE.

Positions 1-54 (MRLNTLSPAPGRVSAKKRVGRGIGSGLGKTAGRGHKGLKSRSGGSVKPGFEGGQ) are disordered. Positions 21 to 31 (RGIGSGLGKTA) are enriched in gly residues.

This sequence belongs to the universal ribosomal protein uL15 family. In terms of assembly, part of the 50S ribosomal subunit.

In terms of biological role, binds to the 23S rRNA. In Saccharophagus degradans (strain 2-40 / ATCC 43961 / DSM 17024), this protein is Large ribosomal subunit protein uL15.